The following is a 223-amino-acid chain: PKHD-type hydroxylase CPS_3426 (223 aa).

Positions 77-175 (KSMMPFIISE…RKVALTWIES (99 aa)) constitute a Fe2OG dioxygenase domain. His-96, Asp-98, and His-156 together coordinate Fe cation. Arg-166 serves as a coordination point for 2-oxoglutarate.

Requires Fe(2+) as cofactor. L-ascorbate is required as a cofactor.

The polypeptide is PKHD-type hydroxylase CPS_3426 (Colwellia psychrerythraea (strain 34H / ATCC BAA-681) (Vibrio psychroerythus)).